Consider the following 203-residue polypeptide: Glycerol-3-phosphate acyltransferase (203 aa).

Helical transmembrane passes span 5–25, 55–75, 84–104, 118–138, and 159–179; these read IYIA…GLIL, LAAA…IVAA, IAAN…LFPV, IGVL…MWLA, and IFLW…LTLL.

This sequence belongs to the PlsY family. In terms of assembly, probably interacts with PlsX.

It is found in the cell inner membrane. It carries out the reaction an acyl phosphate + sn-glycerol 3-phosphate = a 1-acyl-sn-glycero-3-phosphate + phosphate. The protein operates within lipid metabolism; phospholipid metabolism. In terms of biological role, catalyzes the transfer of an acyl group from acyl-phosphate (acyl-PO(4)) to glycerol-3-phosphate (G3P) to form lysophosphatidic acid (LPA). This enzyme utilizes acyl-phosphate as fatty acyl donor, but not acyl-CoA or acyl-ACP. This is Glycerol-3-phosphate acyltransferase from Rhodopseudomonas palustris (strain ATCC BAA-98 / CGA009).